Consider the following 244-residue polypeptide: Large ribosomal subunit protein uL2 (244 aa).

Composition is skewed to basic residues over residues 1 to 12 and 234 to 244; these read MGKRPLVRRRGR and KTGRARIKERK. 2 disordered regions span residues 1–30 and 203–244; these read MGKRPLVRRRGRGGNQFRSTSTGKVGTKAN and HGGG…KERK.

Belongs to the universal ribosomal protein uL2 family. Part of the 50S ribosomal subunit. Forms a bridge to the 30S subunit in the 70S ribosome.

In terms of biological role, one of the primary rRNA binding proteins. Required for association of the 30S and 50S subunits to form the 70S ribosome, for tRNA binding and peptide bond formation. It has been suggested to have peptidyltransferase activity; this is somewhat controversial. Makes several contacts with the 16S rRNA in the 70S ribosome. This chain is Large ribosomal subunit protein uL2, found in Nitrosopumilus maritimus (strain SCM1).